The following is a 488-amino-acid chain: Catalase (488 aa).

The segment at 1–26 (MTDRKNLTTNQGVPVGDNQNSMTAGR) is disordered. Positions 7-23 (LTTNQGVPVGDNQNSMT) are enriched in polar residues. Active-site residues include histidine 55 and asparagine 128. Tyrosine 338 is a heme binding site.

This sequence belongs to the catalase family. Heme is required as a cofactor.

The protein resides in the cytoplasm. It catalyses the reaction 2 H2O2 = O2 + 2 H2O. Its function is as follows. Decomposes hydrogen peroxide into water and oxygen; serves to protect cells from the toxic effects of hydrogen peroxide. The protein is Catalase (kat) of Listeria monocytogenes serovar 1/2a (strain ATCC BAA-679 / EGD-e).